The sequence spans 554 residues: Hyaluronan synthase 3 (554 aa).

The Cytoplasmic segment spans residues 1–15 (MPVQLTTALRVVGTS). Residues 16 to 36 (LFALVVLGGILAAYVTGYQFI) traverse the membrane as a helical segment. Residues 37-44 (HTEKHYLS) are Extracellular-facing. The helical transmembrane segment at 45–65 (FGLYGAILGLHLLIQSLFAFL) threads the bilayer. Topologically, residues 66–378 (EHRRMRRAGR…NSLWFHKHHL (313 aa)) are cytoplasmic. Residues 379–399 (WMTYESVVTGFFPFFLIATVI) form a helical membrane-spanning segment. The Extracellular portion of the chain corresponds to 400 to 409 (QLFYRGRIWN). Residues 410 to 430 (ILLFLLTVQLVGIIKATYACF) form a helical membrane-spanning segment. Residues 431–441 (LRGNAEMIFMS) are Cytoplasmic-facing. A helical transmembrane segment spans residues 442–462 (LYSLLYMSSLLPAKIFAIATI). An N-linked (GlcNAc...) asparagine glycan is attached at Asn-463. Over 463-474 (NKSGWGTSGRKT) the chain is Extracellular. A helical transmembrane segment spans residues 475–495 (IVVNFIGLIPVSIWVAVLLGG). Topologically, residues 496–516 (LAYTAYCQDLFSETELAFLVS) are cytoplasmic. Residues 517 to 537 (GAILYGCYWVALLMLYLAIIA) form a helical membrane-spanning segment. The Extracellular segment spans residues 538–554 (RRCGKKPEQYSLAFAEV).

It belongs to the NodC/HAS family. It depends on Mg(2+) as a cofactor. In terms of processing, O-GlcNAcylation increases the hyaluronan synthase activity, HAS3 stability and its plasma membrane residence. The concentration of UDP-GlcNAc controls the level of O-GlcNAc modification.

It localises to the cell membrane. The protein resides in the golgi apparatus membrane. It is found in the golgi apparatus. Its subcellular location is the trans-Golgi network membrane. The protein localises to the cytoplasmic vesicle. It carries out the reaction [hyaluronan](n) + UDP-N-acetyl-alpha-D-glucosamine = N-acetyl-beta-D-glucosaminyl-(1-&gt;4)-[hyaluronan](n) + UDP + H(+). The catalysed reaction is N-acetyl-beta-D-glucosaminyl-(1-&gt;4)-[hyaluronan](n) + UDP-alpha-D-glucuronate = [hyaluronan](n+1) + UDP + H(+). It functions in the pathway glycan biosynthesis; hyaluronan biosynthesis. Its function is as follows. Catalyzes the addition of GlcNAc or GlcUA monosaccharides to the nascent hyaluronan polymer. Therefore, it is essential to hyaluronan synthesis a major component of most extracellular matrices that has a structural role in tissues architectures and regulates cell adhesion, migration and differentiation. This is one of three isoenzymes responsible for cellular hyaluronan synthesis. The protein is Hyaluronan synthase 3 (Has3) of Mus musculus (Mouse).